Here is a 181-residue protein sequence, read N- to C-terminus: Oligoribonuclease (181 aa).

The 164-residue stretch at 8–171 (LIWIDLEMTG…DDIRESVAEL (164 aa)) folds into the Exonuclease domain. Tyr129 is an active-site residue.

It belongs to the oligoribonuclease family.

It is found in the cytoplasm. 3'-to-5' exoribonuclease specific for small oligoribonucleotides. This is Oligoribonuclease from Sodalis glossinidius (strain morsitans).